The chain runs to 126 residues: Protein ApaG (126 aa).

The region spanning 2 to 126 (SDPRYQIDVS…FRLAVPGALH (125 aa)) is the ApaG domain.

This chain is Protein ApaG, found in Pseudomonas putida (strain W619).